Consider the following 355-residue polypeptide: Aromatic amino acid aminotransferase (355 aa).

At Lys217 the chain carries N6-(pyridoxal phosphate)lysine.

Belongs to the class-II pyridoxal-phosphate-dependent aminotransferase family. In terms of assembly, homodimer. It depends on pyridoxal 5'-phosphate as a cofactor.

It catalyses the reaction an aromatic L-alpha-amino acid + 2-oxoglutarate = an aromatic oxo-acid + L-glutamate. Its function is as follows. Aminotransferase that catalyzes the conversion of aromatic amino acids and 2-oxoglutarate into corresponding aromatic oxo acids and L-glutamate. This chain is Aromatic amino acid aminotransferase, found in Mycobacterium avium (strain 104).